We begin with the raw amino-acid sequence, 675 residues long: MKFNSGALFEKLRGGAGEGNTLNIALYVGLAIFIVLALANFLLSATTANKAQENITRASEMRVISQQIAKNALEAAAGNADAFELLDKSQKGFQSAWNAVKDEQVSDPEAMARLQTLWDEVNANADVILKGEDTVLDLHEVADTLAQTIPSLQAEYEGVVEILVTTDAAPEQIAFAQRQSWLAERIVRSIAKVLEGGDGAVIAADSFGRDASLFGRIMNGMIEGDAAMGIDQVNDPDALDYLAEIADLFDEFVNQSVDEILETAPELFQVRNAADTIFRRSQDLLEESTNLNNQFENTTSGLFPSVWLGGVSAGLAVLFFFIIMAQRNRQAAKLKDELESENQRNQAAILRLLDELGDLADGDLTVQATVTEDFTGAIADSINYSIDQLRNLVQTINNSAVQVASAAQETQSTAMHLAEASEHQAQEIAGASAAVNEMAVSIDQVSANAAESAAVAERAVAIANKGAEVVQATIHGMDTIREQIQETSKRIKRLGESSQEIGDIVSLINDIADQTNILALNAAIQASMAGEAGRGFAVVADEVQRLAERSAAATKQIETLVKTIQTDTNEAVISMEATTAEVVKGARLAQDAGVALEEIESVSKTLADLIQNISNAARQQAASAGHISNTMNVIQEITSQTSAGTTATARSIGNLAEMAQDMRNSVAGFRLPEHS.

The next 2 membrane-spanning stretches (helical) occupy residues 24 to 44 (IALYVGLAIFIVLALANFLLS) and 303 to 323 (FPSVWLGGVSAGLAVLFFFII). The 52-residue stretch at 343–394 (QRNQAAILRLLDELGDLADGDLTVQATVTEDFTGAIADSINYSIDQLRNLVQ) folds into the HAMP domain. The Methyl-accepting transducer domain maps to 399–635 (SAVQVASAAQ…HISNTMNVIQ (237 aa)).

Belongs to the methyl-accepting chemotaxis (MCP) protein family.

It localises to the membrane. It participates in hydrocarbon metabolism; alkane degradation. Its function is as follows. Chemotactic-signal transducers respond to changes in the concentration of attractants and repellents in the environment, transduce a signal from the outside to the inside of the cell, and facilitate sensory adaptation through the variation of the level of methylation. This chain is Putative methyl-accepting chemotaxis AlkN, found in Alcanivorax borkumensis (strain ATCC 700651 / DSM 11573 / NCIMB 13689 / SK2).